A 260-amino-acid chain; its full sequence is Snake venom serine protease homolog KN4 (260 aa).

The signal sequence occupies residues 1–18 (MVLIRVLANLLILQLSYA). A propeptide spanning residues 19-24 (QKSSEL) is cleaved from the precursor. A Peptidase S1 domain is found at 25-251 (IIGGDECNIN…HLDWIQNIIA (227 aa)). Disulfide bonds link Cys-31–Cys-165, Cys-52–Cys-68, Cys-100–Cys-258, Cys-144–Cys-212, Cys-176–Cys-191, and Cys-202–Cys-227. N-linked (GlcNAc...) asparagine glycans are attached at residues Asn-83, Asn-123, Asn-124, Asn-156, and Asn-172. An N-linked (GlcNAc...) asparagine glycan is attached at Asn-253.

This sequence belongs to the peptidase S1 family. Snake venom subfamily. As to expression, expressed by the venom gland.

It localises to the secreted. In terms of biological role, snake venom serine protease homolog that may act in the hemostasis system of the prey. The chain is Snake venom serine protease homolog KN4 from Trimeresurus stejnegeri (Chinese green tree viper).